We begin with the raw amino-acid sequence, 474 residues long: Probable aspartate--tRNA ligase, cytoplasmic (474 aa).

Glu-203 provides a ligand contact to L-aspartate. The segment at 225–228 (QLYK) is aspartate. Position 247 (Arg-247) interacts with L-aspartate. ATP-binding positions include 247-249 (RAE), 255-257 (RYL), and Glu-397. The L-aspartate site is built by Ser-400 and Arg-404. Residue 445-448 (GLER) participates in ATP binding.

Belongs to the class-II aminoacyl-tRNA synthetase family. Type 2 subfamily. Homodimer.

The protein resides in the cytoplasm. It carries out the reaction tRNA(Asp) + L-aspartate + ATP = L-aspartyl-tRNA(Asp) + AMP + diphosphate. The sequence is that of Probable aspartate--tRNA ligase, cytoplasmic from Enterocytozoon bieneusi (strain H348) (Microsporidian parasite).